Reading from the N-terminus, the 666-residue chain is Peptidase S41 family protein phomP1' (666 aa).

An N-terminal signal peptide occupies residues 1–27; that stretch reads MSSFLVQTAVVRLFLLGVVFWFPFALS. N-linked (GlcNAc...) asparagine glycans are attached at residues Asn-70, Asn-214, and Asn-234. The tract at residues 303–504 is peptidase S41 domain; it reads DVAVLQITSF…LLQAQGVRTV (202 aa). N-linked (GlcNAc...) asparagine glycosylation is found at Asn-555 and Asn-612.

It belongs to the peptidase S41A family.

It functions in the pathway mycotoxin biosynthesis. In terms of biological role, peptidase S41 family protein; part of the gene cluster that mediates the biosynthesis of the phomopsins, a group of hexapeptide mycotoxins which infects lupins and causes lupinosis disease in livestock. Within the pathway, phomP1 and phomP1' are probably involved in the processing of the phomA and phomA' precursors. The pathway starts with the processing of the precursor phomA by several endopeptidases including kexin proteases as well as the cluster-specific S41 family peptidase phomP1 and the oligopeptidase phomG to produce 10 identical copies of the hexapeptide Tyr-Val-Ile-Pro-Ile-Asp. After being excised from the precursor peptide, the core peptides are cyclized and modified post-translationally by enzymes encoded within the gene cluster. The timing and order of proteolysis of the phomA precursor and PTMs are still unknown. Two tyrosinase-like enzymes, phomQ1 and phomQ2, catalyze the chlorination and hydroxylation of Tyr, respectively. PhomYb, is proposed to be involved in the construction of the macrocyclic structure. The other 4 ustYa family proteins may be involved in PTMs that generate the unique structure of phomopsin A. PhomYa is required for the hydroxylation of C-beta of Tyr. PhomYc, phomYd, and phomYe are responsible for the biosynthesis of 2,3-dehydroisoleucine (dIle), 2,3-dehydroaspartic acid (dAsp), and 3,4-dehydroproline (dPro), respectively. While dIle formation by phomYc is indispensable for the installation of dAsp by phomYd, the order of the other PTMs have not been elucidated yet. Most of the biosynthetic enzymes likely have broad substrate specificity, and thus, there might be a metabolic grid from a precursor to phomopsin A. The enzyme(s) responsible for the biosynthesis of 3,4-dehydrovaline (dVal) have also not been identified yet. Finally, phomM acts as an S-adenosylmethionine-dependent alpha-N-methyltransferase that catalyzes two successive N-methylation reactions, converting N-desmethyl-phomopsin A to phomopsin A and phomopsin A further to an N,N-dimethylated congener called phomopsin E. The chain is Peptidase S41 family protein phomP1' from Diaporthe leptostromiformis (Lupinosis disease fungus).